Here is a 614-residue protein sequence, read N- to C-terminus: Acetylcholinesterase (614 aa).

An N-terminal signal peptide occupies residues 1–31 (MRPPQCLLHTPSLASPLLLLLLWLLGGGVGA). A disulfide bridge connects residues cysteine 100 and cysteine 127. Residue tryptophan 117 coordinates galanthamine. Huperzine A is bound at residue tryptophan 117. Glycine 153 lines the huprine W pocket. Tyrosine 164 lines the huperzine A pocket. Position 233-234 (233-234 (ES)) interacts with galanthamine. Position 234 (serine 234) interacts with huprine W. Residue serine 234 is the Acyl-ester intermediate of the active site. A disulfide bond links cysteine 288 and cysteine 303. A glycan (N-linked (GlcNAc...) asparagine) is linked at asparagine 296. Glutamate 365 (charge relay system) is an active-site residue. Tyrosine 368 provides a ligand contact to galanthamine. Residue tyrosine 368 coordinates huperzine A. An N-linked (GlcNAc...) asparagine glycan is attached at asparagine 381. Cysteine 440 and cysteine 560 are oxidised to a cystine. 2 residues coordinate huprine W: tryptophan 470 and histidine 478. Residue histidine 478 is the Charge relay system of the active site. Asparagine 495 carries N-linked (GlcNAc...) asparagine glycosylation. Phenylalanine 588 carries GPI-anchor amidated glycine lipidation.

It belongs to the type-B carboxylesterase/lipase family. Interacts with PRIMA1. The interaction with PRIMA1 is required to anchor it to the basal lamina of cells and organize into tetramers. Isoform H generates GPI-anchored dimers; disulfide linked. Isoform T generates multiple structures, ranging from monomers and dimers to collagen-tailed and hydrophobic-tailed forms, in which catalytic tetramers are associated with anchoring proteins that attach them to the basal lamina or to cell membranes. In the collagen-tailed forms, isoform T subunits are associated with a specific collagen, COLQ, which triggers the formation of isoform T tetramers, from monomers and dimers. Isoform R may be monomeric. As to expression, isoform H is highly expressed in erythrocytes.

The protein resides in the synapse. It is found in the secreted. Its subcellular location is the cell membrane. The protein localises to the nucleus. It catalyses the reaction acetylcholine + H2O = choline + acetate + H(+). In terms of biological role, hydrolyzes rapidly the acetylcholine neurotransmitter released into the synaptic cleft allowing to terminate the signal transduction at the neuromuscular junction. Role in neuronal apoptosis. In Homo sapiens (Human), this protein is Acetylcholinesterase.